A 555-amino-acid chain; its full sequence is Potassium-transporting ATPase potassium-binding subunit (555 aa).

Transmembrane regions (helical) follow at residues 2 to 22 (IWVA…PTGV), 60 to 80 (QYAL…YFIF), 130 to 150 (IGIT…VMAF), 173 to 193 (VFLP…VPQT), 246 to 266 (MSNI…PFTY), 278 to 298 (ILFV…TTSE), 374 to 394 (AGFV…GLMV), 412 to 432 (LIAV…ALAL), 483 to 503 (LVMF…AASL), and 525 to 545 (GIFI…MLVL).

This sequence belongs to the KdpA family. As to quaternary structure, the system is composed of three essential subunits: KdpA, KdpB and KdpC.

The protein localises to the cell membrane. Its function is as follows. Part of the high-affinity ATP-driven potassium transport (or Kdp) system, which catalyzes the hydrolysis of ATP coupled with the electrogenic transport of potassium into the cytoplasm. This subunit binds the extracellular potassium ions and delivers the ions to the membrane domain of KdpB through an intramembrane tunnel. This chain is Potassium-transporting ATPase potassium-binding subunit, found in Bacillus cereus (strain B4264).